We begin with the raw amino-acid sequence, 755 residues long: uncharacterized protein (755 aa).

9 consecutive transmembrane segments (helical) span residues 46–66 (LGLGVGLASQLILLADMGGLY), 70–90 (LKTIFGAWVGAAIAMAVGTIV), 93–113 (GWGLGLAITGFVLFASGYLAV), 118–138 (GAMVGIVTTFAFLLGAQNVST), 143–163 (FTSLAIGGMWSLILAIFIWPF), 411–431 (IAHLTQIPYGFWIVITLIFVL), 446–466 (LLGTFLGVLVMSIALKLIQDP), 482–502 (ALLRFHYSVAVFFITAFALIL), and 514–534 (ALLSRLVCTLIGSAIALGLAF).

The protein belongs to the YccS/YhfK family.

It localises to the cell membrane. This is an uncharacterized protein from Synechocystis sp. (strain ATCC 27184 / PCC 6803 / Kazusa).